Here is a 579-residue protein sequence, read N- to C-terminus: Probable receptor-like serine/threonine-protein kinase At5g57670 (579 aa).

T256 bears the Phosphothreonine mark. Positions 267-542 constitute a Protein kinase domain; that stretch reads FHQGNIVGIG…LLTNGNEAEI (276 aa). ATP contacts are provided by residues 273–281 and K295; that span reads VGIGGYSEV. D392 acts as the Proton acceptor in catalysis. S396 bears the Phosphoserine mark. Position 432 is a phosphothreonine (T432).

It belongs to the protein kinase superfamily. Ser/Thr protein kinase family.

It catalyses the reaction L-seryl-[protein] + ATP = O-phospho-L-seryl-[protein] + ADP + H(+). It carries out the reaction L-threonyl-[protein] + ATP = O-phospho-L-threonyl-[protein] + ADP + H(+). The polypeptide is Probable receptor-like serine/threonine-protein kinase At5g57670 (Arabidopsis thaliana (Mouse-ear cress)).